Reading from the N-terminus, the 643-residue chain is Thread biopolymer filament subunit alpha (643 aa).

A compositionally biased stretch (polar residues) spans 1-13 (MSISQTVSKSYTK). Residues 1–34 (MSISQTVSKSYTKSVSRGGQGVSYSQSSSHKVGG) form a disordered region. The segment at 1 to 191 (MSISQTVSKS…PDTVQHTRIR (191 aa)) is head. Residues 14–31 (SVSRGGQGVSYSQSSSHK) are compositionally biased toward low complexity. One can recognise an IF rod domain in the interval 192–510 (EKQDLQTLNT…KLLDSEETRI (319 aa)). The tract at residues 193–227 (KQDLQTLNTKFANLVDQVRTLEQHNAILKAQISMI) is coil 1A. The segment at 228-240 (TSPSDTPEGPVNT) is linker 1. Positions 241-341 (AVVASTVTAT…YNARVREVQA (101 aa)) are coil 1B. Positions 342 to 362 (AVTGGPTAAYSIRVDNTHQAI) are linker 12. The coil 2A stretch occupies residues 363–381 (DLTTSLQEMKTHYEVLATK). The linker 2 stretch occupies residues 382 to 389 (SREEAFTQ). Residues 390 to 510 (VQPRIQEMAV…KLLDSEETRI (121 aa)) are coil 2B. The tail stretch occupies residues 511–643 (SHGGGITITT…SSARSSSRIY (133 aa)). The disordered stretch occupies residues 622–643 (SRAGYSASRKSYSSARSSSRIY).

Belongs to the intermediate filament family. In terms of assembly, coiled-coil heterodimer of an alpha and a gamma subunit. Assemble into 10 nm filaments. Forms a massive, conical, intermediate filament biopolymer of approximately 60 cm.

It is found in the secreted. The protein localises to the extracellular space. In terms of biological role, released extracellularly into seawater and provides physical and biological defense against invasive organism by modulation of the viscoelastic properties of mucus. This chain is Thread biopolymer filament subunit alpha, found in Eptatretus stoutii (Pacific hagfish).